Reading from the N-terminus, the 638-residue chain is uncharacterized protein (638 aa).

One can recognise a CID domain in the interval 1–138 (MDLVELDYLS…KIENALLKYK (138 aa)). 2 disordered regions span residues 318 to 338 (QPPLTHSYVHPGPQSHKYSLS) and 615 to 638 (LGKRKERDDSMDSMSSKVIKQESK).

This is an uncharacterized protein from Schizosaccharomyces pombe (strain 972 / ATCC 24843) (Fission yeast).